The sequence spans 78 residues: Mandibular organ-inhibiting hormone 2 (78 aa).

Cystine bridges form between Cys7–Cys44, Cys24–Cys40, and Cys27–Cys53.

This sequence belongs to the arthropod CHH/MIH/GIH/VIH hormone family. Produced by the medulla terminalis X-organ in the eyestalks and transported to the sinus gland where it is stored and released.

Its subcellular location is the secreted. In terms of biological role, represses the synthesis of methyl farnesoate, the precursor of insect juvenile hormone III in the mandibular organ. This chain is Mandibular organ-inhibiting hormone 2, found in Cancer pagurus (Rock crab).